Here is a 416-residue protein sequence, read N- to C-terminus: GTPase Obg (416 aa).

The Obg domain occupies 1 to 157 (MFQDVLVITV…RRLRLELMLI (157 aa)). 2 disordered regions span residues 25-44 (EKFV…GGSV) and 62-82 (TYKA…RGGE). Gly residues predominate over residues 32-42 (GPDGGDGGRGG). A compositionally biased stretch (basic and acidic residues) spans 63-72 (YKAEDGEHGR). Residues 158 to 324 (ADVGLVGYPN…LKEALHALVR (167 aa)) enclose the OBG-type G domain. GTP-binding positions include 164 to 171 (GYPNAGKS), 189 to 193 (FTTLS), 211 to 214 (DIPG), 277 to 280 (NKVD), and 305 to 307 (SAL). Mg(2+) contacts are provided by serine 171 and threonine 191. Residues 336-414 (PRKEVQAGVE…IGGLEFEYIP (79 aa)) enclose the OCT domain.

It belongs to the TRAFAC class OBG-HflX-like GTPase superfamily. OBG GTPase family. In terms of assembly, monomer. Requires Mg(2+) as cofactor.

It localises to the cytoplasm. Its function is as follows. An essential GTPase which binds GTP, GDP and possibly (p)ppGpp with moderate affinity, with high nucleotide exchange rates and a fairly low GTP hydrolysis rate. Plays a role in control of the cell cycle, stress response, ribosome biogenesis and in those bacteria that undergo differentiation, in morphogenesis control. The chain is GTPase Obg from Thermus thermophilus (strain ATCC BAA-163 / DSM 7039 / HB27).